A 125-amino-acid chain; its full sequence is Glycine cleavage system H protein (125 aa).

Residues 23–105 (VSTVGITEHA…FEGGWLFKVR (83 aa)) form the Lipoyl-binding domain. Residue K64 is modified to N6-lipoyllysine.

This sequence belongs to the GcvH family. In terms of assembly, the glycine cleavage system is composed of four proteins: P, T, L and H. (R)-lipoate is required as a cofactor.

Its function is as follows. The glycine cleavage system catalyzes the degradation of glycine. The H protein shuttles the methylamine group of glycine from the P protein to the T protein. In Streptomyces avermitilis (strain ATCC 31267 / DSM 46492 / JCM 5070 / NBRC 14893 / NCIMB 12804 / NRRL 8165 / MA-4680), this protein is Glycine cleavage system H protein.